The sequence spans 375 residues: Trichodiene synthase (375 aa).

It belongs to the trichodiene synthase family.

The catalysed reaction is (2E,6E)-farnesyl diphosphate = trichodiene + diphosphate. It participates in sesquiterpene biosynthesis; trichothecene biosynthesis. In terms of biological role, TS is a member of the terpene cyclase group of enzymes. It catalyzes the isomerization and cyclization of farnesyl pyro-phosphate to form trichodiene, the first cyclic intermediate in the biosynthetic pathway for trichothecenes. It serves to branch trichothecene biosynthesis from the isoprenoid pathway. The sequence is that of Trichodiene synthase (TRI5) from Fusarium pseudograminearum (Wheat and barley crown-rot fungus).